The sequence spans 132 residues: Small ribosomal subunit protein uS8 (132 aa).

Belongs to the universal ribosomal protein uS8 family. Part of the 30S ribosomal subunit. Contacts proteins S5 and S12.

Its function is as follows. One of the primary rRNA binding proteins, it binds directly to 16S rRNA central domain where it helps coordinate assembly of the platform of the 30S subunit. This Bartonella tribocorum (strain CIP 105476 / IBS 506) protein is Small ribosomal subunit protein uS8.